The following is a 431-amino-acid chain: Glucose-1-phosphate adenylyltransferase (431 aa).

Residues Y109, G175, E190–K191, and S208 each bind alpha-D-glucose 1-phosphate.

Belongs to the bacterial/plant glucose-1-phosphate adenylyltransferase family. Homotetramer.

It carries out the reaction alpha-D-glucose 1-phosphate + ATP + H(+) = ADP-alpha-D-glucose + diphosphate. The protein operates within glycan biosynthesis; glycogen biosynthesis. In terms of biological role, involved in the biosynthesis of ADP-glucose, a building block required for the elongation reactions to produce glycogen. Catalyzes the reaction between ATP and alpha-D-glucose 1-phosphate (G1P) to produce pyrophosphate and ADP-Glc. In Alteromonas mediterranea (strain DSM 17117 / CIP 110805 / LMG 28347 / Deep ecotype), this protein is Glucose-1-phosphate adenylyltransferase.